The sequence spans 563 residues: Arginine--tRNA ligase (563 aa).

A 'HIGH' region motif is present at residues 121–131 (PNIAKPFSIGH).

Belongs to the class-I aminoacyl-tRNA synthetase family. Monomer.

It is found in the cytoplasm. It catalyses the reaction tRNA(Arg) + L-arginine + ATP = L-arginyl-tRNA(Arg) + AMP + diphosphate. This Streptococcus pneumoniae (strain ATCC BAA-255 / R6) protein is Arginine--tRNA ligase.